The chain runs to 198 residues: Syndecan-4 (198 aa).

An N-terminal signal peptide occupies residues 1–18 (MAPARLFALLLFFVGGVA). At 19-145 (ESIRETEVID…QGSNIFERTE (127 aa)) the chain is on the extracellular side. 3 O-linked (Xyl...) (glycosaminoglycan) serine glycosylation sites follow: S39, S61, and S63. An O-linked (Xyl...) (chondroitin sulfate) serine glycan is attached at S95. Residues 146–170 (VLAALIVGGIVGILFAVFLILLLMY) traverse the membrane as a helical segment. Over 171 to 198 (RMKKKDEGSYDLGKKPIYKKAPTNEFYA) the chain is Cytoplasmic.

The protein belongs to the syndecan proteoglycan family. As to quaternary structure, homodimer. Interacts (via its cytoplasmic domain) with GIPC (via its PDZ domain). Interacts (via its cytoplasmic domain) with NUDT16L1. Interacts with CDCP1 and SDCBP. Interacts with DNM2; this interaction is markedly enhanced at focal ahesion site upon induction of focal adhesions and stress-fiber formation. Post-translationally, shedding is enhanced by a number of factors such as heparanase, thrombin or EGF. Also by stress and wound healing. PMA-mediated shedding is inhibited by TIMP3. In terms of processing, O-glycosylated; contains both chondroitin sulfate and heparan sulfate. Ser-39, Ser-61 and Ser-63 can all be modified by either chondroitin sulfate or heparan sulfate, and the protein exists in forms that contain only chondroitin sulfate, only heparan sulfate and both chondroitin sulfate and heparan sulfate. Detected in fibroblasts (at protein level). Also expressed in epithelial cells.

It localises to the membrane. Its subcellular location is the secreted. Cell surface proteoglycan which regulates exosome biogenesis in concert with SDCBP and PDCD6IP. The sequence is that of Syndecan-4 from Homo sapiens (Human).